Here is a 55-residue protein sequence, read N- to C-terminus: ATP synthase F(0) complex subunit 8 (55 aa).

Residues 7–29 (NPWFYIMLMSWLTFSLIIQPELL) traverse the membrane as a helical segment.

It belongs to the ATPase protein 8 family. In terms of assembly, component of the ATP synthase complex composed at least of ATP5F1A/subunit alpha, ATP5F1B/subunit beta, ATP5MC1/subunit c (homooctomer), MT-ATP6/subunit a, MT-ATP8/subunit 8, ATP5ME/subunit e, ATP5MF/subunit f, ATP5MG/subunit g, ATP5MK/subunit k, ATP5MJ/subunit j, ATP5F1C/subunit gamma, ATP5F1D/subunit delta, ATP5F1E/subunit epsilon, ATP5PF/subunit F6, ATP5PB/subunit b, ATP5PD/subunit d, ATP5PO/subunit OSCP. ATP synthase complex consists of a soluble F(1) head domain (subunits alpha(3) and beta(3)) - the catalytic core - and a membrane F(0) domain - the membrane proton channel (subunits c, a, 8, e, f, g, k and j). These two domains are linked by a central stalk (subunits gamma, delta, and epsilon) rotating inside the F1 region and a stationary peripheral stalk (subunits F6, b, d, and OSCP).

Its subcellular location is the mitochondrion membrane. In terms of biological role, subunit 8, of the mitochondrial membrane ATP synthase complex (F(1)F(0) ATP synthase or Complex V) that produces ATP from ADP in the presence of a proton gradient across the membrane which is generated by electron transport complexes of the respiratory chain. ATP synthase complex consist of a soluble F(1) head domain - the catalytic core - and a membrane F(1) domain - the membrane proton channel. These two domains are linked by a central stalk rotating inside the F(1) region and a stationary peripheral stalk. During catalysis, ATP synthesis in the catalytic domain of F(1) is coupled via a rotary mechanism of the central stalk subunits to proton translocation. In vivo, can only synthesize ATP although its ATP hydrolase activity can be activated artificially in vitro. Part of the complex F(0) domain. The polypeptide is ATP synthase F(0) complex subunit 8 (Musophaga violacea (Violet turaco)).